Here is a 414-residue protein sequence, read N- to C-terminus: Protein MAK11 (414 aa).

S2 is modified (N-acetylserine). 6 WD repeats span residues 50-78 (AHSL…RIYD), 90-135 (SHQG…MVWR), 147-177 (GHTA…RLWN), 189-221 (LRKY…LIYE), 238-267 (LMHI…HFYP), and 298-330 (GHTN…VVWD). Phosphoserine occurs at positions 376 and 380. Residue T382 is modified to Phosphothreonine.

As to quaternary structure, associates with 60S pre-ribosomal particles.

It localises to the nucleus. Its subcellular location is the nucleolus. The protein localises to the nucleus membrane. Its function is as follows. Essential for cell growth. Plays a role in assembly of 60S pre-ribosomal particles in the nucleolus. Also required for replication of the M1 double-stranded RNA of the L-A virus. This latter function may reflect an enhanced requirement for free 60S ribosomal particles for the translation of viral mRNAs which lack poly-A tails. This Saccharomyces cerevisiae (strain ATCC 204508 / S288c) (Baker's yeast) protein is Protein MAK11 (MAK11).